Consider the following 157-residue polypeptide: Protein Smg homolog (157 aa).

The protein belongs to the Smg family.

The polypeptide is Protein Smg homolog (Xanthomonas euvesicatoria pv. vesicatoria (strain 85-10) (Xanthomonas campestris pv. vesicatoria)).